The sequence spans 535 residues: Protein translocase subunit SecD (535 aa).

The next 6 helical transmembrane spans lie at 5–25 (LTWK…GIIG), 377–397 (AIIG…GAGI), 402–421 (SLLL…GAVL), 425–444 (GIAG…VLIF), 469–489 (WLTI…LFLF), and 496–516 (GFAV…VFVS).

The protein belongs to the SecD/SecF family. SecD subfamily. As to quaternary structure, forms a complex with SecF. Part of the essential Sec protein translocation apparatus which comprises SecA, SecYEG and auxiliary proteins SecDF. Other proteins may also be involved.

The protein localises to the cell inner membrane. Functionally, part of the Sec protein translocase complex. Interacts with the SecYEG preprotein conducting channel. SecDF uses the proton motive force (PMF) to complete protein translocation after the ATP-dependent function of SecA. The chain is Protein translocase subunit SecD from Koribacter versatilis (strain Ellin345).